Here is a 399-residue protein sequence, read N- to C-terminus: 1-deoxy-D-xylulose 5-phosphate reductoisomerase (399 aa).

NADPH-binding residues include T16, G17, S18, I19, G42, R43, N44, and N127. Residue K128 coordinates 1-deoxy-D-xylulose 5-phosphate. E129 lines the NADPH pocket. D153 serves as a coordination point for Mn(2+). 1-deoxy-D-xylulose 5-phosphate-binding residues include S154, E155, S179, and H202. E155 provides a ligand contact to Mn(2+). G208 is an NADPH binding site. S215, N220, K221, and E224 together coordinate 1-deoxy-D-xylulose 5-phosphate. E224 is a binding site for Mn(2+).

Belongs to the DXR family. It depends on Mg(2+) as a cofactor. Requires Mn(2+) as cofactor.

It carries out the reaction 2-C-methyl-D-erythritol 4-phosphate + NADP(+) = 1-deoxy-D-xylulose 5-phosphate + NADPH + H(+). It functions in the pathway isoprenoid biosynthesis; isopentenyl diphosphate biosynthesis via DXP pathway; isopentenyl diphosphate from 1-deoxy-D-xylulose 5-phosphate: step 1/6. Its function is as follows. Catalyzes the NADPH-dependent rearrangement and reduction of 1-deoxy-D-xylulose-5-phosphate (DXP) to 2-C-methyl-D-erythritol 4-phosphate (MEP). In Caulobacter vibrioides (strain NA1000 / CB15N) (Caulobacter crescentus), this protein is 1-deoxy-D-xylulose 5-phosphate reductoisomerase.